The sequence spans 594 residues: Elongation factor 4 (594 aa).

The 183-residue stretch at 2–184 folds into the tr-type G domain; that stretch reads KNIRNFSIIA…TIVAKVPAPE (183 aa). GTP-binding positions include 14–19 and 131–134; these read DHGKST and NKID.

Belongs to the TRAFAC class translation factor GTPase superfamily. Classic translation factor GTPase family. LepA subfamily.

It localises to the cell inner membrane. It carries out the reaction GTP + H2O = GDP + phosphate + H(+). Required for accurate and efficient protein synthesis under certain stress conditions. May act as a fidelity factor of the translation reaction, by catalyzing a one-codon backward translocation of tRNAs on improperly translocated ribosomes. Back-translocation proceeds from a post-translocation (POST) complex to a pre-translocation (PRE) complex, thus giving elongation factor G a second chance to translocate the tRNAs correctly. Binds to ribosomes in a GTP-dependent manner. This is Elongation factor 4 from Francisella tularensis subsp. novicida (strain U112).